The sequence spans 251 residues: Ell1-associated factor 1 (251 aa).

Disordered stretches follow at residues 110 to 187 (SKTV…DMEV) and 201 to 251 (FDQE…EDED). Over residues 112 to 123 (TVPSNAITQSDN) the composition is skewed to polar residues. Residues 124–135 (SQISESKSTSQS) are compositionally biased toward low complexity. The segment covering 143–157 (RRKEKELEASKDGKI) has biased composition (basic and acidic residues). Composition is skewed to polar residues over residues 204-220 (EFNSIDDPSTVSQTASK) and 236-251 (SSAQAEGISSASEDED). Serine 247 is modified (phosphoserine).

This sequence belongs to the EAF family. In terms of assembly, forms a stable heterodimer with ell1. Ell1-eaf1 complex interacts with RNA polymerase II.

The protein resides in the nucleus. Its function is as follows. Activates transcription elongation by RNA polymerase II and pyrophosphorolysis as a complex with ell1. Acts as a transcriptional transactivator of ell1 elongation activities. The sequence is that of Ell1-associated factor 1 (eaf1) from Schizosaccharomyces pombe (strain 972 / ATCC 24843) (Fission yeast).